A 576-amino-acid chain; its full sequence is Eukaryotic translation initiation factor 2A (576 aa).

WD repeat units lie at residues 71-119 (LPAA…LVFS), 266-307 (DREG…VSII), 308-349 (PPAP…KKIT), and 351-396 (VEAA…MFYE). 2 disordered regions span residues 422–461 (SASLPSPPTPHASASKLAAKPSVKPAGAYRPPGARGQNST) and 475–505 (GSANKHVNSSRQRVVPGATPVIDGNKKNNKK). Residues 475–486 (GSANKHVNSSRQ) show a composition bias toward polar residues.

It belongs to the WD repeat EIF2A family.

The protein resides in the cytoplasm. Functionally, functions in the early steps of protein synthesis of a small number of specific mRNAs. Acts by directing the binding of methionyl-tRNAi to 40S ribosomal subunits. In contrast to the eIF-2 complex, it binds methionyl-tRNAi to 40S subunits in a codon-dependent manner, whereas the eIF-2 complex binds methionyl-tRNAi to 40S subunits in a GTP-dependent manner. This is Eukaryotic translation initiation factor 2A from Schizosaccharomyces pombe (strain 972 / ATCC 24843) (Fission yeast).